The sequence spans 387 residues: Chorismate synthase (387 aa).

Residues Arg-42 and Arg-48 each coordinate NADP(+). FMN is bound by residues Arg-131–Ser-133, Gln-251–Ala-252, Gly-295, Lys-310–Thr-314, and Arg-336.

Belongs to the chorismate synthase family. In terms of assembly, homotetramer. Requires FMNH2 as cofactor.

It carries out the reaction 5-O-(1-carboxyvinyl)-3-phosphoshikimate = chorismate + phosphate. The protein operates within metabolic intermediate biosynthesis; chorismate biosynthesis; chorismate from D-erythrose 4-phosphate and phosphoenolpyruvate: step 7/7. In terms of biological role, catalyzes the anti-1,4-elimination of the C-3 phosphate and the C-6 proR hydrogen from 5-enolpyruvylshikimate-3-phosphate (EPSP) to yield chorismate, which is the branch point compound that serves as the starting substrate for the three terminal pathways of aromatic amino acid biosynthesis. This reaction introduces a second double bond into the aromatic ring system. In Syntrophotalea carbinolica (strain DSM 2380 / NBRC 103641 / GraBd1) (Pelobacter carbinolicus), this protein is Chorismate synthase.